The chain runs to 227 residues: DNA repair protein RecO (227 aa).

The protein belongs to the RecO family.

Functionally, involved in DNA repair and RecF pathway recombination. In Pseudomonas savastanoi pv. phaseolicola (strain 1448A / Race 6) (Pseudomonas syringae pv. phaseolicola (strain 1448A / Race 6)), this protein is DNA repair protein RecO.